The chain runs to 42 residues: Tachystatin-B2 (42 aa).

3 disulfide bridges follow: C4–C20, C11–C25, and C19–C37.

Granular hemocytes, small secretory granules.

It is found in the secreted. In terms of biological role, exhibits stronger antimicrobial activity against the Gram-positive bacteria (S.aureus (IC(50) is 7.4 ug/ml)) and fungi (C.albicans (IC(50) is 3.0 ug/ml) and P.pastoris (IC(50) is 0.1 ug/ml)) than Gram-negative bacteria (E.coli no inhibition at 100 ug/ml). Binds to chitin (4.3 uM are required to obtain 50% of binding). Does not cause hemolysis on sheep erythrocytes. Has no blocking activity on the P-type calcium channel. This chain is Tachystatin-B2, found in Tachypleus tridentatus (Japanese horseshoe crab).